Consider the following 251-residue polypeptide: Triosephosphate isomerase (251 aa).

9 to 11 contributes to the substrate binding site; it reads NWK. Residue histidine 96 is the Electrophile of the active site. Glutamate 167 serves as the catalytic Proton acceptor. Substrate contacts are provided by residues glycine 173, serine 213, and 234-235; that span reads GG.

The protein belongs to the triosephosphate isomerase family. In terms of assembly, homodimer.

It localises to the cytoplasm. It carries out the reaction D-glyceraldehyde 3-phosphate = dihydroxyacetone phosphate. Its pathway is carbohydrate biosynthesis; gluconeogenesis. It functions in the pathway carbohydrate degradation; glycolysis; D-glyceraldehyde 3-phosphate from glycerone phosphate: step 1/1. Involved in the gluconeogenesis. Catalyzes stereospecifically the conversion of dihydroxyacetone phosphate (DHAP) to D-glyceraldehyde-3-phosphate (G3P). The polypeptide is Triosephosphate isomerase (Bacteroides fragilis (strain ATCC 25285 / DSM 2151 / CCUG 4856 / JCM 11019 / LMG 10263 / NCTC 9343 / Onslow / VPI 2553 / EN-2)).